Reading from the N-terminus, the 431-residue chain is Histidinol dehydrogenase (431 aa).

3 residues coordinate NAD(+): Tyr-130, Gln-191, and Asn-214. The substrate site is built by Ser-237, Gln-259, and His-262. Gln-259 and His-262 together coordinate Zn(2+). Residues Glu-327 and His-328 each act as proton acceptor in the active site. Substrate contacts are provided by His-328, Asp-361, Glu-415, and His-420. Asp-361 contacts Zn(2+). His-420 contacts Zn(2+).

It belongs to the histidinol dehydrogenase family. It depends on Zn(2+) as a cofactor.

It carries out the reaction L-histidinol + 2 NAD(+) + H2O = L-histidine + 2 NADH + 3 H(+). Its pathway is amino-acid biosynthesis; L-histidine biosynthesis; L-histidine from 5-phospho-alpha-D-ribose 1-diphosphate: step 9/9. In terms of biological role, catalyzes the sequential NAD-dependent oxidations of L-histidinol to L-histidinaldehyde and then to L-histidine. The sequence is that of Histidinol dehydrogenase from Bradyrhizobium diazoefficiens (strain JCM 10833 / BCRC 13528 / IAM 13628 / NBRC 14792 / USDA 110).